A 210-amino-acid chain; its full sequence is Regulator of G-protein signaling 17 (210 aa).

Positions 1 to 21 (MRKRQQSQNEGTQAVSQAPGN) are disordered. An RGS domain is found at 84–200 (NFDKMMKTPA…LNSQIYKAFV (117 aa)). Tyrosine 137 is subject to Phosphotyrosine.

As to quaternary structure, interacts with GNAI1 and GNAQ. Interacts with GNAZ and GNAI2. Interacts with OPRM1. Forms a complex with mu-opioid receptors and G(alpha)z/i2 subunits, including GNAZ and GNAI2; the formation of this complex results in mu-opioid receptor desensitization. Interacts with HINT1. N- and O-glycosylated in synapsomal membranes. In terms of processing, serine phosphorylated in synapsomal membranes. Post-translationally, sumoylated with SUMO1 and SUM02 in synaptosomes. The sumoylated forms act as a scaffold for sequestering mu-opioid receptor-activated G(alpha) subunits. Desumoylated by HINT1. Detected in brain (at protein level). Highly expressed in the hypothalamus, periaqueductal gray matter, and pons-medulla. Lower levels in the thalamus, cortex and spinal cord. Weak expression in the striatum and cerebellum.

The protein resides in the membrane. It is found in the synapse. It localises to the synaptosome. Its subcellular location is the nucleus. The protein localises to the cytoplasm. In terms of biological role, regulates G protein-coupled receptor signaling cascades, including signaling via muscarinic acetylcholine receptor CHRM2 and dopamine receptor DRD2. Inhibits signal transduction by increasing the GTPase activity of G protein alpha subunits, thereby driving them into their inactive GDP-bound form. Binds selectively to GNAZ and GNAI2 subunits, accelerates their GTPase activity and regulates their signaling activities. Negatively regulates mu-opioid receptor-mediated activation of the G-proteins. The chain is Regulator of G-protein signaling 17 (Rgs17) from Mus musculus (Mouse).